The chain runs to 385 residues: uncharacterized protein (385 aa).

Lysine 194 is modified (N6-(pyridoxal phosphate)lysine).

The protein belongs to the class-V pyridoxal-phosphate-dependent aminotransferase family. The cofactor is pyridoxal 5'-phosphate.

This is an uncharacterized protein from Methanocaldococcus jannaschii (strain ATCC 43067 / DSM 2661 / JAL-1 / JCM 10045 / NBRC 100440) (Methanococcus jannaschii).